The sequence spans 436 residues: Probable mediator of RNA polymerase II transcription subunit 26b (436 aa).

The segment at 71–111 (PGDDEANRGTTGNGGGGTAVDEDYEVAGGSKESKANSSRGD) is disordered. A TFIIS N-terminal domain is found at 139 to 214 (KEVARIKEIL…AEWKELVDQW (76 aa)). Positions 263–376 (HFFDSLDFDG…PQQEKLKGLD (114 aa)) are disordered. Composition is skewed to basic and acidic residues over residues 276-290 (NSEE…ERRP) and 332-350 (TEQR…EKPM). Positions 382-402 (EFAKRKLQESYQHHENAKKQR) form a coiled coil. The disordered stretch occupies residues 408–436 (EMIPKQGSAQKPQLKRPGMSNRNWANGRK). Residues 427–436 (SNRNWANGRK) show a composition bias toward polar residues.

It belongs to the Mediator complex subunit 26 family. In terms of assembly, component of the Mediator complex.

The protein resides in the nucleus. Its function is as follows. Component of the Mediator complex, a coactivator involved in the regulated transcription of nearly all RNA polymerase II-dependent genes. Mediator functions as a bridge to convey information from gene-specific regulatory proteins to the basal RNA polymerase II transcription machinery. The Mediator complex, having a compact conformation in its free form, is recruited to promoters by direct interactions with regulatory proteins and serves for the assembly of a functional preinitiation complex with RNA polymerase II and the general transcription factors. May play a role in transcription elongation. The protein is Probable mediator of RNA polymerase II transcription subunit 26b (MED26B) of Arabidopsis thaliana (Mouse-ear cress).